A 527-amino-acid polypeptide reads, in one-letter code: Catalase (527 aa).

Residue Ala2 is modified to N-acetylalanine. Phosphoserine is present on Ser9. Active-site residues include His75 and Asn148. The NADP(+) site is built by His194, Ser201, Arg203, and Asn213. Position 221 is an N6-succinyllysine (Lys221). Position 233 is an N6-acetyllysine (Lys233). NADP(+)-binding residues include Lys237, Trp303, His305, and Lys306. Lys306 is subject to N6-acetyllysine; alternate. An N6-succinyllysine; alternate modification is found at Lys306. Residue Tyr358 participates in heme binding. Ser417 and Ser422 each carry phosphoserine. Lys480 is modified (N6-acetyllysine; alternate). Residue Lys480 is modified to N6-succinyllysine; alternate. An N6-acetyllysine modification is found at Lys499. Residue Thr511 is modified to Phosphothreonine. A phosphoserine mark is found at Ser515 and Ser517. The Microbody targeting signal; atypical signature appears at 524-527 (KANL).

Belongs to the catalase family. As to quaternary structure, homotetramer. Interacts (via microbody targeting signal) with PEX5, monomeric form interacts with PEX5, leading to its translocation into peroxisomes. Heme is required as a cofactor. It depends on NADP(+) as a cofactor.

It is found in the peroxisome matrix. It carries out the reaction 2 H2O2 = O2 + 2 H2O. Catalyzes the degradation of hydrogen peroxide (H(2)O(2)) generated by peroxisomal oxidases to water and oxygen, thereby protecting cells from the toxic effects of hydrogen peroxide. Promotes growth of cells including T-cells, B-cells, myeloid leukemia cells, melanoma cells, mastocytoma cells and normal and transformed fibroblast cells. In Homo sapiens (Human), this protein is Catalase (CAT).